The chain runs to 415 residues: Amino acid decarboxylase lolD2 (415 aa).

Position 62 is an N6-(pyridoxal phosphate)lysine (Lys62). Residues Ser194, Gly231, and 266 to 269 (EPGT) contribute to the pyridoxal 5'-phosphate site. Substrate is bound at residue 315–316 (IV). The active-site Proton donor; shared with dimeric partner is the Cys351. Residue Cys351 is modified to S-nitrosocysteine. Residue Asp352 coordinates substrate. Tyr381 is a binding site for pyridoxal 5'-phosphate.

It belongs to the Orn/Lys/Arg decarboxylase class-II family. As to quaternary structure, homodimer. Pyridoxal 5'-phosphate is required as a cofactor.

The protein operates within alkaloid biosynthesis. Its function is as follows. Amino acid decarboxylase; part of the gene cluster that mediates the biosynthesis of loline alkaloids, potent insecticidal agents composed of a pyrrolizidine ring system and an uncommon ether bridge linking carbons 2 and 7. Lolines are structurally differentiated by the various modifications of the L-amino group and include norloline, loline, N-methylloline, N-acetylloline, N-acetylnorloline, and N-formylloline. The first committed step is the condensation of O-acetyl-L-homoserine (derived from L-aspartic acid) and L-proline, probably catalyzed by the gamma-type pyridoxal 5'-phosphate(PLP)-dependent enzyme lolC, to give the diamino diacid, NACPP. Ensuing cyclization, decarboxylation, and acetylation steps yield 1-exo-acetamidopyrrolizidine (AcAP). LolO is required for installation of the ether bridge upon the pathway intermediate, 1-exo-acetamidopyrrolizidine (AcAP). In sequential 2-oxoglutarate- and O(2)-consuming steps, lolO removes hydrogens from C2 and C7 of AcAP to form both carbon-oxygen bonds in N-acetylnorloline (NANL), the precursor to all other lolines. The enzymes lolD, lolE, lolF and lolT have also been proposed to be involved in the ether-bridge installation. Further processing of the exocyclic moiety of NANL by fungal N-acetamidase (LolN), methyltransferase (LolM), and cytochrome P450 (LolP) enzymes, with occasional involvement of a plant acetyltransferase, generates the other known lolines. LolN transforms NANL to norlonine which is monomethylated and dimethylated to respectively lonine and N-methyllonine (NML) by lolM. LolP catalyzes hydroxylation of the methyl group in N-methylloline (NML) and further oxygenation to N-formylloline (NFL). A plant acetyltransferase is responsible for the acetylation of loline to form N-acetylloline (NAL). LolA might interact with aspartate kinase to prevent feedback inhibition of its activity by these end products and thereby promote production of L-homoserine from L-aspartate. The polypeptide is Amino acid decarboxylase lolD2 (Epichloe uncinata (Endophyte fungus)).